A 410-amino-acid chain; its full sequence is Platelet-activating factor acetylhydrolase IB subunit beta (410 aa).

The segment at 1 to 38 is required for self-association and interaction with PAFAH1B2 and PAFAH1B3; sequence MVLSQRQRDELNRAIADYLRSNGYEEAYSVFKKEAELD. Residues 1–66 form an interaction with NDE1 region; the sequence is MVLSQRQRDE…SVIRLQKKVM (66 aa). The tract at residues 1–102 is interaction with NDEL1; sequence MVLSQRQRDE…EWIPRPPEKY (102 aa). One can recognise a LisH domain in the interval 7–39; sequence QRDELNRAIADYLRSNGYEEAYSVFKKEAELDM. Lys-53 carries the post-translational modification N6-acetyllysine. Residues 56–82 are a coiled coil; that stretch reads TSVIRLQKKVMELESKLNEAKEEFTSG. The interval 83 to 410 is interaction with dynein and dynactin; sequence GPLGQKRDPK…DQTVKVWECR (328 aa). WD repeat units lie at residues 106-147, 148-187, 190-229, 232-271, 274-333, 336-377, and 378-410; these read GHRS…RTLK, GHTD…CIRT, GHDH…CVKT, GHRE…CKAE, EHEH…CLMT, GHDN…KTLN, and AHEH…WECR. The residue at position 109 (Ser-109) is a Phosphoserine. The tract at residues 367–409 is interaction with DCX; sequence YKNKRCMKTLNAHEHFVTSLDFHKTAPYVVTGSVDQTVKVWEC. The segment at 388–410 is interaction with NDEL1; sequence FHKTAPYVVTGSVDQTVKVWECR.

Belongs to the WD repeat LIS1/nudF family. Can self-associate. Component of the cytosolic PAF-AH (I) heterotetrameric enzyme, which is composed of PAFAH1B1 (beta), PAFAH1B2 (alpha2) and PAFAH1B3 (alpha1) subunits. The catalytic activity of the enzyme resides in the alpha1 (PAFAH1B3) and alpha2 (PAFAH1B2) subunits, whereas the beta subunit (PAFAH1B1) has regulatory activity. Trimer formation is not essential for the catalytic activity. Interacts with the catalytic dimer of PAF-AH (I) heterotetrameric enzyme: interacts with PAFAH1B2 homodimer (alpha2/alpha2 homodimer), PAFAH1B3 homodimer (alpha1/alpha1 homodimer) and PAFAH1B2-PAFAH1B3 heterodimer (alpha2/alpha1 heterodimer). Interacts with DCX, dynein, dynactin, IQGAP1, KATNB1, NDE1, NDEL1, NUDC and RSN. Interacts with DISC1, and this interaction is enhanced by NDEL1. Interacts with DAB1 when DAB1 is phosphorylated in response to RELN/reelin signaling. Interacts with INTS13. Interacts with DCDC1.

It localises to the cytoplasm. The protein localises to the cytoskeleton. It is found in the microtubule organizing center. The protein resides in the centrosome. Its subcellular location is the spindle. It localises to the nucleus membrane. Functionally, regulatory subunit (beta subunit) of the cytosolic type I platelet-activating factor (PAF) acetylhydrolase (PAF-AH (I)), an enzyme that catalyzes the hydrolyze of the acetyl group at the sn-2 position of PAF and its analogs and participates in PAF inactivation. Regulates the PAF-AH (I) activity in a catalytic dimer composition-dependent manner. Positively regulates the activity of the minus-end directed microtubule motor protein dynein. May enhance dynein-mediated microtubule sliding by targeting dynein to the microtubule plus end. Required for several dynein- and microtubule-dependent processes such as the maintenance of Golgi integrity, the peripheral transport of microtubule fragments and the coupling of the nucleus and centrosome. Required during brain development for the proliferation of neuronal precursors and the migration of newly formed neurons from the ventricular/subventricular zone toward the cortical plate. Neuronal migration involves a process called nucleokinesis, whereby migrating cells extend an anterior process into which the nucleus subsequently translocates. During nucleokinesis dynein at the nuclear surface may translocate the nucleus towards the centrosome by exerting force on centrosomal microtubules. Also required for proper activation of Rho GTPases and actin polymerization at the leading edge of locomoting cerebellar neurons and postmigratory hippocampal neurons in response to calcium influx triggered via NMDA receptors. May also play a role in other forms of cell locomotion including the migration of fibroblasts during wound healing. Required for dynein recruitment to microtubule plus ends and BICD2-bound cargos. May modulate the Reelin pathway through interaction of the PAF-AH (I) catalytic dimer with VLDLR. The sequence is that of Platelet-activating factor acetylhydrolase IB subunit beta from Felis catus (Cat).